The following is a 529-amino-acid chain: DnaJ homolog l(2)tid, mitochondrial (529 aa).

A mitochondrion-targeting transit peptide spans 1 to 22 (MISCKNLCVLRQLPLKNCRRHY). Position 35 is an omega-N-methylarginine (R35). One can recognise a J domain in the interval 80-145 (DYYATLGVAK…QKRREYDTYG (66 aa)). K121 is modified (N6-acetyllysine). The CR-type zinc finger occupies 230 to 308 (GVNKDVNVNV…CEGKGQTVQR (79 aa)). Zn(2+)-binding residues include C243, C246, C260, C263, C282, C285, C296, and C299. One copy of the CXXCXGXG motif; approximate repeat lies at 243–250 (CPKCAGSK). The CXXCXGXG motif repeat unit spans residues 260–267 (CQYCNGTG). The CXXCXGXG motif; approximate repeat unit spans residues 282-289 (CRYCQGTR). A CXXCXGXG motif repeat occupies 296–303 (CAECEGKG). Residues 441–529 (TPGQIHGMAQ…FLNKIKSMFN (89 aa)) form a disordered region. The span at 497–508 (QSEKSETRRKDQ) shows a compositional bias: basic and acidic residues.

It localises to the mitochondrion outer membrane. In terms of biological role, may act as a tumor suppressor in larval imaginal disks. This chain is DnaJ homolog l(2)tid, mitochondrial (l(2)tid), found in Drosophila virilis (Fruit fly).